We begin with the raw amino-acid sequence, 565 residues long: Membrane protein insertase YidC (565 aa).

Transmembrane regions (helical) follow at residues 6–26 (VLLIFSWLTVATLLWMDWGKN), 348–368 (LMALIGQGLFWILSHLNSLLH), 370–390 (WGWAIVGLVVLLRIAMYPLSA), 437–457 (GGCFPILIQMPIFFALYWVLV), 479–499 (PYFILPLLNIVIMWATQKLTP), and 516–536 (PLIFGVMMAFVPSGLALYWVI).

It belongs to the OXA1/ALB3/YidC family. Type 1 subfamily. In terms of assembly, interacts with the Sec translocase complex via SecD. Specifically interacts with transmembrane segments of nascent integral membrane proteins during membrane integration.

It is found in the cell inner membrane. Required for the insertion and/or proper folding and/or complex formation of integral membrane proteins into the membrane. Involved in integration of membrane proteins that insert both dependently and independently of the Sec translocase complex, as well as at least some lipoproteins. Aids folding of multispanning membrane proteins. In Xylella fastidiosa (strain M12), this protein is Membrane protein insertase YidC.